A 449-amino-acid chain; its full sequence is Na(+)-translocating NADH-quinone reductase subunit A (449 aa).

This sequence belongs to the NqrA family. As to quaternary structure, composed of six subunits; NqrA, NqrB, NqrC, NqrD, NqrE and NqrF.

The catalysed reaction is a ubiquinone + n Na(+)(in) + NADH + H(+) = a ubiquinol + n Na(+)(out) + NAD(+). NQR complex catalyzes the reduction of ubiquinone-1 to ubiquinol by two successive reactions, coupled with the transport of Na(+) ions from the cytoplasm to the periplasm. NqrA to NqrE are probably involved in the second step, the conversion of ubisemiquinone to ubiquinol. This is Na(+)-translocating NADH-quinone reductase subunit A from Actinobacillus pleuropneumoniae serotype 3 (strain JL03).